A 94-amino-acid chain; its full sequence is Small ribosomal subunit protein uS19 (94 aa).

The protein belongs to the universal ribosomal protein uS19 family.

Protein S19 forms a complex with S13 that binds strongly to the 16S ribosomal RNA. This chain is Small ribosomal subunit protein uS19, found in Dictyoglomus turgidum (strain DSM 6724 / Z-1310).